The chain runs to 107 residues: Putidaredoxin (107 aa).

Residues 2 to 106 form the 2Fe-2S ferredoxin-type domain; it reads SKVVYVSHDG…GIVVDVPDRQ (105 aa). [2Fe-2S] cluster-binding residues include cysteine 40, cysteine 46, cysteine 49, and cysteine 87.

It belongs to the adrenodoxin/putidaredoxin family. Monomer. Requires [2Fe-2S] cluster as cofactor.

Functionally, the oxidation of camphor by cytochrome P450-CAM requires the participation of a flavoprotein, putidaredoxin reductase, and an iron-sulfur protein, putidaredoxin, to mediate the transfer of electrons from NADH to P450 for oxygen activation. In Pseudomonas putida (Arthrobacter siderocapsulatus), this protein is Putidaredoxin (camB).